The sequence spans 445 residues: tRNA-2-methylthio-N(6)-dimethylallyladenosine synthase (445 aa).

An MTTase N-terminal domain is found at 3–124 (KKLYIKTYGC…LPELISKVVR (122 aa)). [4Fe-4S] cluster contacts are provided by C12, C48, C87, C162, C166, and C169. Residues 148-380 (YPQGASSFIS…QQELATQQLA (233 aa)) enclose the Radical SAM core domain. One can recognise a TRAM domain in the interval 383-445 (QSCVGSTMRV…ALNSLTGEIL (63 aa)).

It belongs to the methylthiotransferase family. MiaB subfamily. In terms of assembly, monomer. [4Fe-4S] cluster is required as a cofactor.

Its subcellular location is the cytoplasm. It carries out the reaction N(6)-dimethylallyladenosine(37) in tRNA + (sulfur carrier)-SH + AH2 + 2 S-adenosyl-L-methionine = 2-methylsulfanyl-N(6)-dimethylallyladenosine(37) in tRNA + (sulfur carrier)-H + 5'-deoxyadenosine + L-methionine + A + S-adenosyl-L-homocysteine + 2 H(+). Its function is as follows. Catalyzes the methylthiolation of N6-(dimethylallyl)adenosine (i(6)A), leading to the formation of 2-methylthio-N6-(dimethylallyl)adenosine (ms(2)i(6)A) at position 37 in tRNAs that read codons beginning with uridine. The polypeptide is tRNA-2-methylthio-N(6)-dimethylallyladenosine synthase (Rickettsia prowazekii (strain Madrid E)).